The chain runs to 79 residues: uncharacterized protein (79 aa).

This is an uncharacterized protein from Helicobacter pylori (strain ATCC 700392 / 26695) (Campylobacter pylori).